A 572-amino-acid chain; its full sequence is Proline--tRNA ligase (572 aa).

It belongs to the class-II aminoacyl-tRNA synthetase family. ProS type 1 subfamily. Homodimer.

The protein localises to the cytoplasm. The enzyme catalyses tRNA(Pro) + L-proline + ATP = L-prolyl-tRNA(Pro) + AMP + diphosphate. In terms of biological role, catalyzes the attachment of proline to tRNA(Pro) in a two-step reaction: proline is first activated by ATP to form Pro-AMP and then transferred to the acceptor end of tRNA(Pro). As ProRS can inadvertently accommodate and process non-cognate amino acids such as alanine and cysteine, to avoid such errors it has two additional distinct editing activities against alanine. One activity is designated as 'pretransfer' editing and involves the tRNA(Pro)-independent hydrolysis of activated Ala-AMP. The other activity is designated 'posttransfer' editing and involves deacylation of mischarged Ala-tRNA(Pro). The misacylated Cys-tRNA(Pro) is not edited by ProRS. This chain is Proline--tRNA ligase, found in Caldicellulosiruptor saccharolyticus (strain ATCC 43494 / DSM 8903 / Tp8T 6331).